Reading from the N-terminus, the 513-residue chain is Abl interactor 2 (513 aa).

S40 carries the post-translational modification Phosphoserine. The t-SNARE coiled-coil homology domain maps to 45–107 (RALEETKAYT…DIHKEKVARR (63 aa)). Positions 167 to 431 (KMGGLPRTTP…PPEDYEEEEA (265 aa)) are disordered. Residues 174–185 (TTPPTQKPPSPP) are compositionally biased toward pro residues. Phosphoserine occurs at positions 183 and 227. Polar residues predominate over residues 217–241 (PTRNMAPSQQSPVRTASVNQRNRTY). Positions 242–272 (SSSGSSGGSHPSSRSSSRENSGSGSVGVPIA) are enriched in low complexity. Pro residues predominate over residues 273 to 282 (VPTPSPPSVF). The span at 283-325 (PAPAGSAGTPPLPATSASAPAPLVPATVPSSTAPNAAAGGAPN) shows a compositional bias: low complexity. A Phosphothreonine modification is found at T361. The residue at position 368 (S368) is a Phosphoserine. Residues 376-399 (SITSQTSLQNQMNGGPFYSQNPVS) are compositionally biased toward polar residues. Positions 400 to 409 (DTPPPPPPVE) are enriched in pro residues. Positions 451-510 (SYLEKVVAIYDYTKDKEDELSFQEGAIIYVIKKNDDGWYEGVMNGVTGLFPGNYVESIMH) constitute an SH3 domain.

This sequence belongs to the ABI family. Component of the WAVE complex composed of ABI2, CYFIP1 or CYFIP2, BRK1, NCKAP1 and WASF1/WAVE1. Within the complex, a heterodimer containing NCKAP1 and CYFIP1 interacts with a heterotrimer formed by WAVE1, ABI2 and BRK1. CYFIP2 binds to activated RAC1 which causes the complex to dissociate, releasing activated WASF1. Interacts (via SH3 domain) with ABL1 and ABL2. As to quaternary structure, (Microbial infection) Interacts with human cytomegalovirus UL135. Post-translationally, phosphorylated by ABL1. In terms of tissue distribution, widely expressed. Abundant in testes, ovary, thymus, and colon, with lower but detectable levels in prostate, peripheral blood leukocytes, and spleen.

Its subcellular location is the cytoplasm. The protein resides in the nucleus. It localises to the cell projection. The protein localises to the lamellipodium. It is found in the filopodium. Its subcellular location is the cytoskeleton. The protein resides in the cell junction. It localises to the adherens junction. In terms of biological role, regulator of actin cytoskeleton dynamics underlying cell motility and adhesion. Functions as a component of the WAVE complex, which activates actin nucleating machinery Arp2/3 to drive lamellipodia formation. Acts as a regulator and substrate of nonreceptor tyrosine kinases ABL1 and ABL2 involved in processes linked to cell growth and differentiation. Positively regulates ABL1-mediated phosphorylation of ENAH, which is required for proper polymerization of nucleated actin filaments at the leading edge. Contributes to the regulation of actin assembly at the tips of neuron projections. In particular, controls dendritic spine morphogenesis and may promote dendritic spine specification toward large mushroom-type spines known as repositories of memory in the brain. In hippocampal neurons, may mediate actin-dependent BDNF-NTRK2 early endocytic trafficking that triggers dendrite outgrowth. Participates in ocular lens morphogenesis, likely by regulating lamellipodia-driven adherens junction formation at the epithelial cell-secondary lens fiber interface. Also required for nascent adherens junction assembly in epithelial cells. The chain is Abl interactor 2 from Homo sapiens (Human).